The chain runs to 794 residues: MRVRIGLTLLLCAVLLSLASASSDEEGSQDESLDSKTTLTSDESVKDHTTAGRVVAGQIFLDSEESELESSIQEEEDSLKSQEGESVTEDISFLESPNPENKDYEEPKKVRKPALTAIEGTAHGEPCHFPFLFLDKEYDECTSDGREDGRLWCATTYDYKADEKWGFCETEEEAAKRRQMQEAEMMYQTGMKILNGSNKKSQKREAYRYLQKAASMNHTKALERVSYALLFGDYLPQNIQAAREMFEKLTEEGSPKGQTALGFLYASGLGVNSSQAKALVYYTFGALGGNLIAHMVLGYRYWAGIGVLQSCESALTHYRLVANHVASDISLTGGSVVQRIRLPDEVENPGMNSGMLEEDLIQYYQFLAEKGDVQAQVGLGQLHLHGGRGVEQNHQRAFDYFNLAANAGNSHAMAFLGKMYSEGSDIVPQSNETALHYFKKAADMGNPVGQSGLGMAYLYGRGVQVNYDLALKYFQKAAEQGWVDGQLQLGSMYYNGIGVKRDYKQALKYFNLASQGGHILAFYNLAQMHASGTGVMRSCHTAVELFKNVCERGRWSERLMTAYNSYKDGDYNAAVIQYLLLAEQGYEVAQSNAAFILDQREASIVGENETYPRALLHWNRAASQGYTVARIKLGDYHFYGFGTDVDYETAFIHYRLASEQQHSAQAMFNLGYMHEKGLGIKQDIHLAKRFYDMAAEASPDAQVPVFLALCKLGVVYFLQYIRETNIRDMFTQLDMDQLLGPEWDLYLMTIIALLLGTVIAYRQRQHQDMPAPRPPGPRPAPPQQEGPPEQQPPQ.

A signal peptide spans 1–21 (MRVRIGLTLLLCAVLLSLASA). Residues 21 to 50 (ASSDEEGSQDESLDSKTTLTSDESVKDHTT) form a disordered region. The tract at residues 22–737 (SSDEEGSQDE…DMFTQLDMDQ (716 aa)) is interaction with ERLEC1, OS9 and SYVN1. The Lumenal portion of the chain corresponds to 22–738 (SSDEEGSQDE…MFTQLDMDQL (717 aa)). Over residues 23 to 32 (SDEEGSQDES) the composition is skewed to acidic residues. Ser-63 carries the post-translational modification Phosphoserine. The segment covering 64–77 (EESELESSIQEEED) has biased composition (acidic residues). Residues 64–109 (EESELESSIQEEEDSLKSQEGESVTEDISFLESPNPENKDYEEPKK) form a disordered region. Residues 122-170 (AHGEPCHFPFLFLDKEYDECTSDGREDGRLWCATTYDYKADEKWGFCET) enclose the Fibronectin type-II domain. 2 disulfides stabilise this stretch: Cys-127-Cys-153 and Cys-141-Cys-168. Sel1-like repeat units lie at residues 183–218 (AEMM…SMNH), 219–254 (TKAL…EEGS), 255–290 (PKGQ…LGGN), 291–326 (LIAH…NHVA), 373–409 (VQAQ…NAGN), 410–446 (SHAM…DMGN), 447–482 (PVGQ…EQGW), 483–518 (VDGQ…QGGH), and 519–554 (ILAF…ERGR). Residues Asn-195 and Asn-217 are each glycosylated (N-linked (GlcNAc...) asparagine). N-linked (GlcNAc...) asparagine glycosylation is present at Asn-272. An important for homodimerization and oligomerization region spans residues 352–537 (NSGMLEEDLI…MHASGTGVMR (186 aa)). A glycan (N-linked (GlcNAc...) asparagine) is linked at Asn-431. A glycan (N-linked (GlcNAc...) asparagine) is linked at Asn-608. 2 Sel1-like repeats span residues 627-662 (TVAR…EQQH) and 664-699 (AQAM…EASP). An interaction with SYVN1 region spans residues 643 to 723 (TDVDYETAFI…VVYFLQYIRE (81 aa)). The mediates retention in the endoplasmic reticulum stretch occupies residues 738–794 (LLGPEWDLYLMTIIALLLGTVIAYRQRQHQDMPAPRPPGPRPAPPQQEGPPEQQPPQ). The helical transmembrane segment at 739–759 (LGPEWDLYLMTIIALLLGTVI) threads the bilayer. Residues 760-794 (AYRQRQHQDMPAPRPPGPRPAPPQQEGPPEQQPPQ) are Cytoplasmic-facing. Positions 766–794 (HQDMPAPRPPGPRPAPPQQEGPPEQQPPQ) are disordered. The segment covering 771-794 (APRPPGPRPAPPQQEGPPEQQPPQ) has biased composition (pro residues).

The protein belongs to the sel-1 family. As to quaternary structure, homodimer and homooligomer. May form a complex with ERLEC1, HSPA5, OS9, and SYVN1. Interacts with FOXRED2 and EDEM1. Interacts with LPL. Interacts with LMF1; may stabilize the complex formed by LPL and LMF1 and thereby promote the export of LPL dimers. Component of the HRD1 complex, which comprises at least SYNV1/HRD1, DERL1/2, FAM8A1, HERPUD1/HERP, OS9, SEL1L and UBE2J1. SYNV1 assembles with SEL1L and FAM8A1 through its transmembrane domains, but interaction with its cytoplasmic domain is required to confer stability to FAM8A1 and enhance recruitment of HERPUD1. The interaction with SYNV1/HRD1 is direct. In terms of assembly, (Microbial infection) Interacts with human cytomegalovirus protein UL148. N-glycosylated. In terms of tissue distribution, highly expressed in pancreas.

It is found in the endoplasmic reticulum membrane. Functionally, plays a role in the endoplasmic reticulum quality control (ERQC) system also called ER-associated degradation (ERAD) involved in ubiquitin-dependent degradation of misfolded endoplasmic reticulum proteins. Enhances SYVN1 stability. Plays a role in LPL maturation and secretion. Required for normal differentiation of the pancreas epithelium, and for normal exocrine function and survival of pancreatic cells. May play a role in Notch signaling. In Homo sapiens (Human), this protein is Protein sel-1 homolog 1.